A 456-amino-acid polypeptide reads, in one-letter code: Ribosome assembly protein METTL17, mitochondrial (456 aa).

The N-terminal 19 residues, 1–19 (MAAALKCLLTLGRWCPGLG), are a transit peptide targeting the mitochondrion. Residues Cys333, Cys339, Cys347, and Cys404 each coordinate [4Fe-4S] cluster.

Belongs to the methyltransferase superfamily. Rsm22 family. As to quaternary structure, associates with the mitochondrial ribosome (mitoribosome).

Its subcellular location is the mitochondrion matrix. In terms of biological role, mitochondrial ribosome (mitoribosome) assembly factor. Binds at the interface of the head and body domains of the mitochondrial small ribosomal subunit (mt-SSU), occluding the mRNA channel and preventing compaction of the head domain towards the body. Probable inactive methyltransferase: retains the characteristic folding and ability to bind S-adenosyl-L-methionine, but it probably lost its methyltransferase activity. The protein is Ribosome assembly protein METTL17, mitochondrial of Homo sapiens (Human).